The following is a 298-amino-acid chain: Distal tail protein (298 aa).

The protein belongs to the skunalikevirus distal tail protein family. Homohexamer. Interacts with the receptor binding protein.

The protein resides in the virion. Its function is as follows. Forms the distal part of the tail. Self-associates as two rings organized back to back, with a central channel allowing DNA ejection. The sequence is that of Distal tail protein from Lactococcus lactis (Lactococcus lactis bacteriophage p2).